We begin with the raw amino-acid sequence, 144 residues long: Ferredoxin-thioredoxin reductase catalytic chain, chloroplastic (144 aa).

Residues 1–31 (MKALQASIAYSFPISSPAASPRRFSRVIRAQ) constitute a chloroplast transit peptide. C83 is a binding site for [4Fe-4S] cluster. The Nucleophile role is filled by C85. Residues C85 and C115 are joined by a disulfide bond. C102, C104, and C113 together coordinate [4Fe-4S] cluster.

Belongs to the ferredoxin thioredoxin reductase beta subunit family. Heterodimer of subunit A (variable subunit) and subunit B (catalytic subunit). Heterodimeric FTR forms a complex with ferredoxin and thioredoxin. It depends on [4Fe-4S] cluster as a cofactor.

The protein resides in the plastid. It localises to the chloroplast. It carries out the reaction [thioredoxin]-disulfide + 2 reduced [2Fe-2S]-[ferredoxin] + 2 H(+) = [thioredoxin]-dithiol + 2 oxidized [2Fe-2S]-[ferredoxin]. Functionally, catalytic subunit of the ferredoxin-thioredoxin reductase (FTR), which catalyzes the two-electron reduction of thioredoxins by the electrons provided by reduced ferredoxin. In Spinacia oleracea (Spinach), this protein is Ferredoxin-thioredoxin reductase catalytic chain, chloroplastic (FTRC).